The chain runs to 360 residues: DNA replication and repair protein RecF (360 aa).

30-37 is a binding site for ATP; it reads GVNGAGKT.

It belongs to the RecF family.

The protein localises to the cytoplasm. The RecF protein is involved in DNA metabolism; it is required for DNA replication and normal SOS inducibility. RecF binds preferentially to single-stranded, linear DNA. It also seems to bind ATP. The sequence is that of DNA replication and repair protein RecF from Thioalkalivibrio sulfidiphilus (strain HL-EbGR7).